A 395-amino-acid chain; its full sequence is Protein pelota (395 aa).

The short motif at 210 to 212 is the PGF motif element; the sequence is PGF. Residues 371–395 are disordered; that stretch reads PELEDSDDDDDEDGAAGGVADSDSD. Positions 372-384 are enriched in acidic residues; it reads ELEDSDDDDDEDG.

This sequence belongs to the eukaryotic release factor 1 family. Pelota subfamily. Component of the Pelota-HBS1L complex, also named Dom34-Hbs1 complex, composed of pelo and HBS1. Interacts with Pink1 and Cnot4; the interaction with Cnot4 appears to be Pink1-dependent. The cofactor is a divalent metal cation. Expressed in ovaries and muscles (at protein level). Expressed throughout all development stages.

The protein localises to the nucleus. It localises to the cytoplasm. Its function is as follows. Component of the Pelota-HBS1L complex, a complex that recognizes stalled ribosomes and triggers the No-Go Decay (NGD) pathway. In the Pelota-HBS1L complex, pelo recognizes ribosomes stalled at the 3' end of an mRNA and engages stalled ribosomes by destabilizing mRNA in the mRNA channel. Following ribosome-binding, the Pelota-HBS1L complex promotes recruitment of pix, which drives the disassembly of stalled ribosomes, followed by degradation of damaged mRNAs as part of the NGD pathway. Required prior to the first meiotic division for spindle formation and nuclear envelope breakdown during spermatogenesis. Together with HBS1, promotes spermatid individualization during spermatogenesis. Required for ovarian germ line stem cell self-renewal and oocyte development during oogenesis. Together with HSB1, required for transposon silencing in the ovary and testis. As part of the Pink1-regulated signaling, is recruited to damaged mitochondrial and is required for recruitment of autophagy receptors and induction of mitophagy. Required for normal eye patterning and for mitotic divisions in the ovary. The chain is Protein pelota (pelo) from Drosophila melanogaster (Fruit fly).